The primary structure comprises 120 residues: Ribonuclease P protein component 4 (120 aa).

Zn(2+)-binding residues include C67, C70, C96, and C99.

The protein belongs to the eukaryotic/archaeal RNase P protein component 4 family. As to quaternary structure, consists of a catalytic RNA component and at least 4-5 protein subunits. Zn(2+) serves as cofactor.

It localises to the cytoplasm. It catalyses the reaction Endonucleolytic cleavage of RNA, removing 5'-extranucleotides from tRNA precursor.. Its function is as follows. Part of ribonuclease P, a protein complex that generates mature tRNA molecules by cleaving their 5'-ends. The sequence is that of Ribonuclease P protein component 4 from Thermococcus sibiricus (strain DSM 12597 / MM 739).